Here is a 269-residue protein sequence, read N- to C-terminus: Putative pyruvate, phosphate dikinase regulatory protein (269 aa).

Residue 153-160 (GVSRTSKT) coordinates ADP.

This sequence belongs to the pyruvate, phosphate/water dikinase regulatory protein family. PDRP subfamily.

The enzyme catalyses N(tele)-phospho-L-histidyl/L-threonyl-[pyruvate, phosphate dikinase] + ADP = N(tele)-phospho-L-histidyl/O-phospho-L-threonyl-[pyruvate, phosphate dikinase] + AMP + H(+). It carries out the reaction N(tele)-phospho-L-histidyl/O-phospho-L-threonyl-[pyruvate, phosphate dikinase] + phosphate + H(+) = N(tele)-phospho-L-histidyl/L-threonyl-[pyruvate, phosphate dikinase] + diphosphate. In terms of biological role, bifunctional serine/threonine kinase and phosphorylase involved in the regulation of the pyruvate, phosphate dikinase (PPDK) by catalyzing its phosphorylation/dephosphorylation. This Pediococcus pentosaceus (strain ATCC 25745 / CCUG 21536 / LMG 10740 / 183-1w) protein is Putative pyruvate, phosphate dikinase regulatory protein.